The primary structure comprises 227 residues: DNA utilization protein YhgH (227 aa).

Belongs to the ComF/GntX family.

Functionally, required for the use of extracellular DNA as a nutrient. Has been suggested to be involved in gluconate metabolism. The polypeptide is DNA utilization protein YhgH (Escherichia coli (strain K12)).